We begin with the raw amino-acid sequence, 132 residues long: Small ribosomal subunit protein uS8 (132 aa).

This sequence belongs to the universal ribosomal protein uS8 family. In terms of assembly, part of the 30S ribosomal subunit. Contacts proteins S5 and S12.

One of the primary rRNA binding proteins, it binds directly to 16S rRNA central domain where it helps coordinate assembly of the platform of the 30S subunit. In Anaplasma marginale (strain Florida), this protein is Small ribosomal subunit protein uS8.